The following is a 307-amino-acid chain: Protein pxr1 (307 aa).

The segment covering 1–11 (MGLAAPRKKTK) has biased composition (basic residues). 2 disordered regions span residues 1–25 (MGLAAPRKKTKISHDPNNTSWSRST) and 144–234 (NATA…SDCD). The segment covering 15–25 (DPNNTSWSRST) has biased composition (polar residues). Residues 25 to 79 (TDGFGHRILKAQGWTPGGFLGARNATHSDLFTTASASHIRVVLKDDTLGLGARPK) enclose the G-patch domain. Basic and acidic residues-rich tracts occupy residues 154–168 (LRVDFPRETSSHESE) and 206–221 (GKELDMSSRKSREKKQ).

It belongs to the PINX1 family.

The protein resides in the nucleus. It localises to the nucleolus. Involved in rRNA-processing at A0, A1 and A2 sites and negatively regulates telomerase. This chain is Protein pxr1 (pxr1), found in Neosartorya fischeri (strain ATCC 1020 / DSM 3700 / CBS 544.65 / FGSC A1164 / JCM 1740 / NRRL 181 / WB 181) (Aspergillus fischerianus).